A 112-amino-acid polypeptide reads, in one-letter code: Small ribosomal subunit protein uS11c (112 aa).

The protein belongs to the universal ribosomal protein uS11 family. As to quaternary structure, part of the 30S ribosomal subunit.

The protein resides in the plastid. This is Small ribosomal subunit protein uS11c from Euglena longa (Euglenophycean alga).